Here is a 359-residue protein sequence, read N- to C-terminus: 3-dehydroquinate synthase (359 aa).

Residues 71–76 (DGEAYK), 105–109 (GVVGD), 129–130 (TT), lysine 142, and lysine 151 each bind NAD(+). Glutamate 184, histidine 247, and histidine 264 together coordinate Zn(2+).

The protein belongs to the sugar phosphate cyclases superfamily. Dehydroquinate synthase family. It depends on Co(2+) as a cofactor. Zn(2+) serves as cofactor. The cofactor is NAD(+).

The protein resides in the cytoplasm. It catalyses the reaction 7-phospho-2-dehydro-3-deoxy-D-arabino-heptonate = 3-dehydroquinate + phosphate. Its pathway is metabolic intermediate biosynthesis; chorismate biosynthesis; chorismate from D-erythrose 4-phosphate and phosphoenolpyruvate: step 2/7. In terms of biological role, catalyzes the conversion of 3-deoxy-D-arabino-heptulosonate 7-phosphate (DAHP) to dehydroquinate (DHQ). The sequence is that of 3-dehydroquinate synthase from Burkholderia cenocepacia (strain HI2424).